The sequence spans 389 residues: MDLYEYQAKELFASHGVPTLPGSVATDSDGAKAAAEQLGGPVVVKAQVKTGGRGKAGGVKLAENPDEAKTKAEAILGLDIKGHITRRVLITTASDIVDEYYFSFLLDRANRNFLAMASVEGGMEIEEVAATKPEALAKIAIDPIQGVDEAKAREIVDAAKFPAEIADQVVEVVVKLWETFVAEDATLVEINPLVKDPQGKIIALDGKVTLDENASFRQPKQAELVDKDAEDPLEAKAKAKDLNYVKLDGEVGIIGNGAGLVMSTLDVVAYAGEKHNGVKPANFLDIGGGASAEVMAAGLDVILGDPAVKSVFVNVFGGITACDAVANGIVQALKILGDEATKPLVVRLDGNNVEEGRRILAEANHPAVTMVDTMDGAADKAAELAAAGA.

In terms of domain architecture, ATP-grasp spans 9-236 (KELFASHGVP…KDAEDPLEAK (228 aa)). ATP-binding positions include Lys-45, 52 to 54 (GRG), Ser-94, and Glu-99. Mg(2+) contacts are provided by Asn-191 and Asp-205. Residues Asn-256 and 318–320 (GIT) each bind substrate.

This sequence belongs to the succinate/malate CoA ligase beta subunit family. In terms of assembly, heterotetramer of two alpha and two beta subunits. Mg(2+) serves as cofactor.

It catalyses the reaction succinate + ATP + CoA = succinyl-CoA + ADP + phosphate. The enzyme catalyses GTP + succinate + CoA = succinyl-CoA + GDP + phosphate. The protein operates within carbohydrate metabolism; tricarboxylic acid cycle; succinate from succinyl-CoA (ligase route): step 1/1. Its function is as follows. Succinyl-CoA synthetase functions in the citric acid cycle (TCA), coupling the hydrolysis of succinyl-CoA to the synthesis of either ATP or GTP and thus represents the only step of substrate-level phosphorylation in the TCA. The beta subunit provides nucleotide specificity of the enzyme and binds the substrate succinate, while the binding sites for coenzyme A and phosphate are found in the alpha subunit. The polypeptide is Succinate--CoA ligase [ADP-forming] subunit beta (Saccharopolyspora erythraea (strain ATCC 11635 / DSM 40517 / JCM 4748 / NBRC 13426 / NCIMB 8594 / NRRL 2338)).